Here is a 571-residue protein sequence, read N- to C-terminus: Urease subunit alpha (571 aa).

In terms of domain architecture, Urease spans 133–571 (AGIDTHIHFI…VALNQRYFFS (439 aa)). Residues His-138, His-140, and Lys-221 each contribute to the Ni(2+) site. At Lys-221 the chain carries N6-carboxylysine. His-223 lines the substrate pocket. 2 residues coordinate Ni(2+): His-250 and His-276. His-324 acts as the Proton donor in catalysis. Asp-364 is a binding site for Ni(2+).

This sequence belongs to the metallo-dependent hydrolases superfamily. Urease alpha subunit family. In terms of assembly, heterotrimer of UreA (gamma), UreB (beta) and UreC (alpha) subunits. Three heterotrimers associate to form the active enzyme. It depends on Ni cation as a cofactor. Post-translationally, carboxylation allows a single lysine to coordinate two nickel ions.

Its subcellular location is the cytoplasm. It carries out the reaction urea + 2 H2O + H(+) = hydrogencarbonate + 2 NH4(+). Its pathway is nitrogen metabolism; urea degradation; CO(2) and NH(3) from urea (urease route): step 1/1. The chain is Urease subunit alpha from Photorhabdus laumondii subsp. laumondii (strain DSM 15139 / CIP 105565 / TT01) (Photorhabdus luminescens subsp. laumondii).